Consider the following 217-residue polypeptide: Uracil-DNA glycosylase (217 aa).

The active-site Proton acceptor is the aspartate 62.

This sequence belongs to the uracil-DNA glycosylase (UDG) superfamily. UNG family.

The protein resides in the cytoplasm. It carries out the reaction Hydrolyzes single-stranded DNA or mismatched double-stranded DNA and polynucleotides, releasing free uracil.. Its function is as follows. Excises uracil residues from the DNA which can arise as a result of misincorporation of dUMP residues by DNA polymerase or due to deamination of cytosine. In Streptococcus equi subsp. zooepidemicus (strain MGCS10565), this protein is Uracil-DNA glycosylase.